A 139-amino-acid polypeptide reads, in one-letter code: Gastrula zinc finger protein XlCGF29.1 (139 aa).

5 C2H2-type zinc fingers span residues F6 to H28, F34 to H56, F62 to H84, F90 to H112, and F117 to H139.

This sequence belongs to the krueppel C2H2-type zinc-finger protein family.

The protein resides in the nucleus. Functionally, may be involved in transcriptional regulation. This Xenopus laevis (African clawed frog) protein is Gastrula zinc finger protein XlCGF29.1.